We begin with the raw amino-acid sequence, 131 residues long: Holo-[acyl-carrier-protein] synthase (131 aa).

Residues Asp-8 and Glu-57 each contribute to the Mg(2+) site.

Belongs to the P-Pant transferase superfamily. AcpS family. Mg(2+) serves as cofactor.

The protein localises to the cytoplasm. It catalyses the reaction apo-[ACP] + CoA = holo-[ACP] + adenosine 3',5'-bisphosphate + H(+). In terms of biological role, transfers the 4'-phosphopantetheine moiety from coenzyme A to a Ser of acyl-carrier-protein. The polypeptide is Holo-[acyl-carrier-protein] synthase (Thiobacillus denitrificans (strain ATCC 25259 / T1)).